The following is a 76-amino-acid chain: Exodeoxyribonuclease 7 small subunit (76 aa).

It belongs to the XseB family. As to quaternary structure, heterooligomer composed of large and small subunits.

The protein resides in the cytoplasm. The enzyme catalyses Exonucleolytic cleavage in either 5'- to 3'- or 3'- to 5'-direction to yield nucleoside 5'-phosphates.. In terms of biological role, bidirectionally degrades single-stranded DNA into large acid-insoluble oligonucleotides, which are then degraded further into small acid-soluble oligonucleotides. The chain is Exodeoxyribonuclease 7 small subunit from Arthrobacter sp. (strain FB24).